Reading from the N-terminus, the 672-residue chain is MSSIRNQNDNRRPTFRDHRTPQFSGRGGSGGGGRRLQNPAHYPQRRDMSPIRRSSAISPVRRSQDHRQRSPEVRRHRSPEKESKDAVVTSTGSSRGATSASVTSSSRRHESGERHRETHRREDKEKKPEKSTDRDADRSNNIAARIQAPVVSSSTHHHHSNRHENRKSTAVKRPAADNRPMTYSTDVSVSRHSENRRKSSSDVSRRHGDKEKRDRKREDVKKKSNGERSSSSGRRREEDHKRKSESSRKEKKDEDVKEKVVDENKVEDEAVEMQGLVEVDCCEEEETIEQAKEHGSDEPERPESHQSAHSAAVSNASHHSDSEEELDYEEDDIDVDLDGDIDVETMKMAARGDLKVDDTTDEDEINDVKDETMEEQKEDGEPEKKKPRTSENDDKDKKHHGSSSSNSHRRREDDKDRRQSSDHHKERRRSPATRQRATDHKESRRSEGTSTRVESAASAAGTEIQRIPSLLTMRIAAPPGIKKLETLYHSGSGGSSSSSSHSSEMIIVGETFSNRWCQCSCAHHLPTTSSAAAAAGSLDASPASSSSSSSNSDASVSRIPSLMSLRTPFNNSCLFLAPPPPPSSSSSSKRSHEAAARIRAPSPPRRSFGDRGNRSDEHHGGSRHMDVGPQRRRLQDHRVRDDGRRVSSFEDRKRPERGFQDSGRVSLSLKHL.

2 disordered regions span residues 1 to 463 (MSSI…AGTE) and 576 to 672 (LAPP…LKHL). Over residues 8–20 (NDNRRPTFRDHRT) the composition is skewed to basic and acidic residues. Residues 25-34 (GRGGSGGGGR) are compositionally biased toward gly residues. The span at 62–85 (RSQDHRQRSPEVRRHRSPEKESKD) shows a compositional bias: basic and acidic residues. The segment covering 87-105 (VVTSTGSSRGATSASVTSS) has biased composition (low complexity). 4 stretches are compositionally biased toward basic and acidic residues: residues 107–138 (RRHESGERHRETHRREDKEKKPEKSTDRDADR), 189–226 (VSRHSENRRKSSSDVSRRHGDKEKRDRKREDVKKKSNG), 234–268 (RRREEDHKRKSESSRKEKKDEDVKEKVVDENKVED), and 289–306 (EQAKEHGSDEPERPESHQ). Positions 307–317 (SAHSAAVSNAS) are enriched in low complexity. Residues 322–343 (SEEELDYEEDDIDVDLDGDIDV) show a composition bias toward acidic residues. Composition is skewed to basic and acidic residues over residues 366–375 (NDVKDETMEE), 382–396 (PEKKKPRTSENDDKD), 410–424 (RREDDKDRRQSSDHH), 436–447 (RATDHKESRRSE), 607–626 (SFGDRGNRSDEHHGGSRHMD), and 636–659 (DHRVRDDGRRVSSFEDRKRPERGF).

Highly expressed in intestinal cells, lateral hypodermal (seam) cells, Pn.p ventral hypodermal cells, and spermatheca. Expressed at low levels in the ventral nerve cord.

The protein localises to the nucleus. Together with unc-5, involved in touch neuron axon guidance. During gonad morphogenesis, plays a role in the unc-5-/unc-6-mediated migration of distal tip cells along the body. This is Protein seu-1 from Caenorhabditis elegans.